Here is a 498-residue protein sequence, read N- to C-terminus: Death-associated inhibitor of apoptosis 2 (498 aa).

3 BIR repeats span residues 12 to 77 (RLAT…SMVL), 116 to 180 (RLVT…PRVQ), and 215 to 280 (RLRT…QFVL). Zn(2+) contacts are provided by C249, C252, H269, and C276. The segment at 451 to 486 (CKVCLDEEVGVVFLPCGHLATCNQCAPSVANCPMCR) adopts an RING-type zinc-finger fold.

It belongs to the IAP family. Interacts with the caspase Strica. Interacts (via BIR2 domain) with rpr and grim. Interacts (via the BIR2 and BIR3 domains) with hid. Interacts (via BIR3 domain) with Drice. Interacts with Dredd; likely to bind Dredd simultaneously with Fadd to form a trimeric complex. In terms of processing, caspase-dependent cleavage is required for suppression of Drice-mediated cell death. Expressed in both principal and stellar cells of the Malphigian tubules.

The protein resides in the nucleus. Its subcellular location is the cytoplasm. Functionally, required for activation of NF-kappaB transcription factors in the immune deficiency (Imd) signaling cascade which is essential for innate immune responses upon infection by Gram-negative bacteria. Promotes cytoplasmic cleavage of Rel and its translocation to the nucleus where it drives expression of antimicrobial peptides. Binds, polyubiquitinates and activates Dredd which is required for Rel-mediated induction of antimicrobial peptides. Anti-apoptotic protein which binds, ubiquitinates and inactivates the effector caspase Drice. Suppresses rpr and hid-dependent cell death in the eye. However, has also been shown to have little, if any, role in the regulation of the canonical caspase-dependent apoptosis pathway. Plays a role in regulating the expression of ion channels. This chain is Death-associated inhibitor of apoptosis 2 (Diap2), found in Drosophila melanogaster (Fruit fly).